A 193-amino-acid chain; its full sequence is Interleukin-18 (193 aa).

Positions Met1–Asp36 are excised as a propeptide.

Belongs to the IL-1 family. As to quaternary structure, forms a ternary complex with ligand-binding receptor subunit IL18R1 and signaling receptor subunit IL18RAP at the plasma membrane. Mature IL18 first binds to IL18R1 forming a low affinity binary complex, which then interacts with IL18RAP to form a high affinity ternary complex that signals inside the cell. Interacts with cargo receptor TMED10; the interaction mediates the translocation from the cytoplasm into the ERGIC (endoplasmic reticulum-Golgi intermediate compartment) and thereby secretion. Post-translationally, the pro-IL-18 precursor is processed by CASP1, CASP4 or CASP5 to yield its mature, active form. The pro-IL-18 precursor features autoinhibitory interactions between the propeptide and the post-cleavage-site region, preventing recognition by the IL18R1 receptor. Processing by CASP1, CASP4 or CASP5 induces conformational changes to generate critical receptor-binding sites. The mature form is then secreted and released in the extracellular milieu by passing through the gasdermin-D (GSDMD) pore. In contrast, cleavage by CASP3 inactivates IL18.

It localises to the cytoplasm. The protein resides in the cytosol. Its subcellular location is the secreted. Its function is as follows. Pro-inflammatory cytokine primarily involved in epithelial barrier repair, polarized T-helper 1 (Th1) cell and natural killer (NK) cell immune responses. Upon binding to IL18R1 and IL18RAP, forms a signaling ternary complex which activates NF-kappa-B, triggering synthesis of inflammatory mediators. Synergizes with IL12/interleukin-12 to induce IFNG synthesis from T-helper 1 (Th1) cells and natural killer (NK) cells. Involved in transduction of inflammation downstream of pyroptosis: its mature form is specifically released in the extracellular milieu by passing through the gasdermin-D (GSDMD) pore. This is Interleukin-18 (IL18) from Boselaphus tragocamelus (Nilgai).